The chain runs to 96 residues: Putative pterin-4-alpha-carbinolamine dehydratase (96 aa).

It belongs to the pterin-4-alpha-carbinolamine dehydratase family.

It catalyses the reaction (4aS,6R)-4a-hydroxy-L-erythro-5,6,7,8-tetrahydrobiopterin = (6R)-L-erythro-6,7-dihydrobiopterin + H2O. This is Putative pterin-4-alpha-carbinolamine dehydratase from Prochlorococcus marinus (strain MIT 9303).